The following is a 3966-amino-acid chain: Histone-lysine N-methyltransferase 2A (3966 aa).

Disordered regions lie at residues Met-1–Val-106 and Val-130–Ile-231. The Menin-binding motif (MBM) signature appears at Arg-6–Arg-25. Residues Thr-15–Gly-29 are compositionally biased toward gly residues. Residues Gly-75 to Ala-102 show a composition bias toward low complexity. An Integrase domain-binding motif 1 (IBM1) motif is present at residues Gly-121–Gly-132. Residues Ser-134 and Ser-140 each carry the phosphoserine; by CK2 modification. Positions Gln-145–Gly-150 match the Integrase domain-binding motif 2 (IBM2) motif. Position 151 is a phosphoserine (Ser-151). Residues Lys-167 to Arg-178 constitute a DNA-binding region (a.T hook 1). The residue at position 195 (Ser-195) is a Phosphoserine. Positions Ser-200–Lys-218 are enriched in basic and acidic residues. A DNA-binding region (a.T hook 2) is located at residues Ser-215–Thr-225. Position 237 is an N6-acetyllysine (Lys-237). The a.T hook 3 DNA-binding region spans Arg-299 to Thr-307. The interval Leu-322–Lys-343 is disordered. Lys-371 carries the N6-acetyllysine modification. Residues Arg-440–Leu-590 are disordered. Positions Ser-450–Gln-489 are enriched in low complexity. Ser-516 is modified (phosphoserine). Low complexity predominate over residues Leu-544 to Ser-557. Pro residues predominate over residues Ser-558–Gln-571. An N6-acetyllysine modification is found at Lys-634. Ser-678 is modified (phosphoserine). Disordered stretches follow at residues Glu-711–Ala-943, Arg-963–Ile-1003, Ile-1034–Arg-1064, and Ile-1101–Pro-1161. Composition is skewed to low complexity over residues Ser-717 to Ser-730 and Leu-760 to Leu-790. Polar residues-rich tracts occupy residues Asn-791–Glu-806 and Gln-817–Pro-830. Thr-837 carries the post-translational modification Phosphothreonine. The segment covering Glu-843–Lys-887 has biased composition (basic and acidic residues). The residue at position 923 (Ser-923) is a Phosphoserine. Residues Ser-989 to Ile-1003 are compositionally biased toward low complexity. Residues Leu-1040–Ser-1059 are compositionally biased toward polar residues. At Ser-1053 the chain carries Phosphoserine. Over residues Ile-1101 to Ser-1111 the composition is skewed to basic and acidic residues. Lys-1127 is modified (N6-acetyllysine). The CXXC-type zinc finger occupies Lys-1144–Gln-1192. 8 residues coordinate Zn(2+): Cys-1152, Cys-1155, Cys-1158, Cys-1164, Cys-1167, Cys-1170, Cys-1186, and Cys-1191. Residues Trp-1196–Gln-1390 form a disordered region. A compositionally biased stretch (basic and acidic residues) spans Ser-1217–Thr-1229. Residues Ala-1230 to Ala-1241 show a composition bias toward low complexity. Lys-1232 is modified (N6-acetyllysine). Over residues Pro-1245–Glu-1270 the composition is skewed to basic and acidic residues. Positions Lys-1369–Gln-1390 are enriched in polar residues. 3 PHD-type zinc fingers span residues Arg-1430 to Cys-1481, Cys-1478 to Cys-1532, and Gly-1565 to Arg-1629. Positions Lys-1583–Glu-1599 are interaction with histone H3K4me3. The region spanning Ala-1637–Val-1767 is the Bromo domain. Disordered stretches follow at residues Tyr-1665–Lys-1714 and Trp-1807–Asp-1870. Positions Ala-1828–Pro-1849 are enriched in pro residues. Ser-1839 is subject to Phosphoserine. The residue at position 1847 (Thr-1847) is a Phosphothreonine. Position 1860 is a phosphoserine (Ser-1860). The C2HC pre-PHD-type zinc finger occupies Asn-1872–Val-1912. The PHD-type 4 zinc-finger motif lies at Leu-1933–Arg-1980. In terms of domain architecture, FYR N-terminal spans Asn-2020 to Cys-2076. Ser-2100 is subject to Phosphoserine. Residues Arg-2147–His-2174 are disordered. Residue Thr-2148 is modified to Phosphothreonine. Phosphoserine is present on residues Ser-2152 and Ser-2202. 4 disordered regions span residues Val-2214–Gly-2339, Arg-2371–Ala-2619, Glu-2639–Asp-2673, and Lys-2709–Glu-2759. The span at Ser-2218–Ser-2230 shows a compositional bias: low complexity. 2 stretches are compositionally biased toward polar residues: residues Leu-2250–Ser-2284 and Thr-2308–Ser-2320. Composition is skewed to basic and acidic residues over residues Ile-2411–Asp-2422 and Ser-2430–Ser-2440. Residues Gly-2498–Glu-2509 show a composition bias toward polar residues. A Glycyl lysine isopeptide (Lys-Gly) (interchain with G-Cter in SUMO2) cross-link involves residue Lys-2524. Residues Glu-2528 to Glu-2537 show a composition bias toward polar residues. The residue at position 2560 (Ser-2560) is a Phosphoserine. Residues Pro-2569–Pro-2588 show a composition bias toward polar residues. Ser-2607 carries the phosphoserine modification. Residues Lys-2609 to Arg-2618 are compositionally biased toward basic residues. Residues Gly-2663 to Asp-2673 show a composition bias toward acidic residues. The segment covering Ser-2722–Pro-2737 has biased composition (polar residues). Basic and acidic residues predominate over residues Asn-2740–Glu-2759. Ser-2792 carries the post-translational modification Phosphoserine. Positions Ser-2843 to Lys-2851 match the 9aaTAD motif. Ser-2951 is subject to Phosphoserine. Lys-2954 carries the post-translational modification N6-acetyllysine. Disordered stretches follow at residues Ile-2958 to Val-3060 and Ala-3164 to Ile-3239. Over residues His-3012–Pro-3025 the composition is skewed to polar residues. Phosphoserine is present on Ser-3032. Residues Val-3035–Val-3060 are compositionally biased toward polar residues. Residues Ser-3167–Ser-3178 show a composition bias toward low complexity. A compositionally biased stretch (polar residues) spans Glu-3196–Ser-3212. Residues Leu-3214–Lys-3229 show a composition bias toward basic residues. Thr-3369 carries the post-translational modification Phosphothreonine. Lys-3459 is modified (N6-acetyllysine). Residues Thr-3462 to Ser-3640 are disordered. Residues Pro-3475–Glu-3487 show a composition bias toward polar residues. The span at Pro-3501–Gly-3528 shows a compositional bias: low complexity. Phosphoserine is present on residues Ser-3510 and Ser-3523. The span at Thr-3558 to Asp-3570 shows a compositional bias: basic and acidic residues. Residues Lys-3663–Phe-3744 form the FYR C-terminal domain. Positions Gly-3759–Glu-3764 match the WDR5 interaction motif (WIN) motif. The interval His-3782–Arg-3805 is disordered. The region spanning Glu-3826 to Lys-3942 is the SET domain. His-3836 and Arg-3838 together coordinate S-adenosyl-L-methionine. Cys-3879 carries the post-translational modification S-methylcysteine; by autocatalysis. S-adenosyl-L-methionine contacts are provided by residues Tyr-3880 and Asn-3903–His-3904. Zn(2+) is bound by residues Cys-3906 and Cys-3954. Residues Asn-3950–Asn-3966 form the Post-SET domain. Residue Asn-3955 coordinates S-adenosyl-L-methionine. 2 residues coordinate Zn(2+): Cys-3956 and Cys-3961.

It belongs to the class V-like SAM-binding methyltransferase superfamily. Histone-lysine methyltransferase family. TRX/MLL subfamily. In terms of assembly, MLL cleavage product N320 heterodimerizes with MLL cleavage product C180 (via SET and FYRC domains). Component of some MLL1/MLL complex, at least composed of the core components KMT2A/MLL1, ASH2L, HCFC1/HCF1, HCFC2, WDR5, DPY30 and RBBP5, as well as the facultative components BACC1, CHD8, E2F6, HSP70, INO80C, KANSL1, LAS1L, MAX, MCRS1, MEN1, MGA, KAT8/MOF, PELP1, PHF20, PRP31, RING2, RUVB1/TIP49A, RUVB2/TIP49B, SENP3, TAF1, TAF4, TAF6, TAF7, TAF9 and TEX10. Interacts (via WIN motif) with WDR5; the interaction is direct. Interaction with WDR5 is required for stable interaction with ASH2L and RBBP5, and thereby also for optimal histone methyltransferase activity. Interacts with KAT8/MOF; the interaction is direct. Interacts with SBF1 and PPP1R15A. Interacts with ZNF335. Interacts with CLOCK and BMAL1 in a circadian manner. Interacts with PPIE; this results in decreased histone H3 methyltransferase activity. Interacts with CREBBP. Interacts with the WRAD complex composed of WDR5, RBBP5, ASH2L and DPY30. Interacts (via MBM motif) with MEN1. Interacts (via IBM motifs) with PSIP1 (via IBD domain) with moderate affinity whereas the KMT2A-MEN1 complex interacts with a greater affinity; MEN1 enhances interaction of KMT2A with PSIP1. Phosphorylation increases its affinity for PSIP1. Forms a complex with CREBBP and CREB1. Proteolytic cleavage by TASP1 generates MLL cleavage 3product N320 and MLL cleavage product C180, which reassemble through a non-covalent association. 2 cleavage sites exist, cleavage site 1 (CS1) and cleavage site 2 (CS2), to generate MLL cleavage products N320 and C180. CS2 is the major site. In terms of processing, phosphorylation increases its interaction with PSIP1. Post-translationally, auto-methylated at Cys-3879: auto-methylation is inhibited by the WRAD complex and unmodified histone H3.

The protein localises to the nucleus. The enzyme catalyses L-lysyl(4)-[histone H3] + S-adenosyl-L-methionine = N(6)-methyl-L-lysyl(4)-[histone H3] + S-adenosyl-L-homocysteine + H(+). It catalyses the reaction N(6)-methyl-L-lysyl(4)-[histone H3] + S-adenosyl-L-methionine = N(6),N(6)-dimethyl-L-lysyl(4)-[histone H3] + S-adenosyl-L-homocysteine + H(+). The catalysed reaction is L-cysteinyl-[protein] + S-adenosyl-L-methionine = S-methyl-L-cysteinyl-[protein] + S-adenosyl-L-homocysteine + H(+). Histone methyltransferase that plays an essential role in early development and hematopoiesis. Catalytic subunit of the MLL1/MLL complex, a multiprotein complex that mediates both methylation of 'Lys-4' of histone H3 (H3K4me) complex and acetylation of 'Lys-16' of histone H4 (H4K16ac). Catalyzes methyl group transfer from S-adenosyl-L-methionine to the epsilon-amino group of 'Lys-4' of histone H3 (H3K4) via a non-processive mechanism. Part of chromatin remodeling machinery predominantly forms H3K4me1 and H3K4me2 methylation marks at active chromatin sites where transcription and DNA repair take place. Has weak methyltransferase activity by itself, and requires other component of the MLL1/MLL complex to obtain full methyltransferase activity. Has no activity toward histone H3 phosphorylated on 'Thr-3', less activity toward H3 dimethylated on 'Arg-8' or 'Lys-9', while it has higher activity toward H3 acetylated on 'Lys-9'. Binds to unmethylated CpG elements in the promoter of target genes and helps maintain them in the nonmethylated state. Required for transcriptional activation of HOXA9. Promotes PPP1R15A-induced apoptosis. Plays a critical role in the control of circadian gene expression and is essential for the transcriptional activation mediated by the CLOCK-BMAL1 heterodimer. Establishes a permissive chromatin state for circadian transcription by mediating a rhythmic methylation of 'Lys-4' of histone H3 (H3K4me) and this histone modification directs the circadian acetylation at H3K9 and H3K14 allowing the recruitment of CLOCK-BMAL1 to chromatin. Also has auto-methylation activity on Cys-3879 in absence of histone H3 substrate. The chain is Histone-lysine N-methyltransferase 2A (Kmt2a) from Mus musculus (Mouse).